We begin with the raw amino-acid sequence, 424 residues long: Histidine--tRNA ligase (424 aa).

Belongs to the class-II aminoacyl-tRNA synthetase family. Homodimer.

Its subcellular location is the cytoplasm. It carries out the reaction tRNA(His) + L-histidine + ATP = L-histidyl-tRNA(His) + AMP + diphosphate + H(+). This Shewanella piezotolerans (strain WP3 / JCM 13877) protein is Histidine--tRNA ligase.